The chain runs to 174 residues: NADH-ubiquinone oxidoreductase chain 6 (174 aa).

Transmembrane regions (helical) follow at residues 1-21 (MTYV…GFSS), 24-44 (SPIY…TIIL), 47-67 (GGGY…MVVF), 86-106 (VEVL…VLWV), 111-131 (GVVV…EGEG), and 151-171 (WLVV…IEIA).

It belongs to the complex I subunit 6 family. Core subunit of respiratory chain NADH dehydrogenase (Complex I) which is composed of 45 different subunits.

The protein localises to the mitochondrion inner membrane. It catalyses the reaction a ubiquinone + NADH + 5 H(+)(in) = a ubiquinol + NAD(+) + 4 H(+)(out). In terms of biological role, core subunit of the mitochondrial membrane respiratory chain NADH dehydrogenase (Complex I) which catalyzes electron transfer from NADH through the respiratory chain, using ubiquinone as an electron acceptor. Essential for the catalytic activity and assembly of complex I. This is NADH-ubiquinone oxidoreductase chain 6 (MT-ND6) from Pan paniscus (Pygmy chimpanzee).